A 122-amino-acid chain; its full sequence is Large ribosomal subunit protein uL14c (122 aa).

This sequence belongs to the universal ribosomal protein uL14 family. In terms of assembly, part of the 50S ribosomal subunit.

It is found in the plastid. Its subcellular location is the chloroplast. Functionally, binds to 23S rRNA. In Lemna minor (Common duckweed), this protein is Large ribosomal subunit protein uL14c.